We begin with the raw amino-acid sequence, 94 residues long: Beta-diguetoxin-Dc1a (94 aa).

Residues 1–17 (MKVFVVLLCLSLAAVYA) form the signal peptide. The propeptide occupies 18–38 (LEERLDKDADIMLDSPADMER). Cystine bridges form between cysteine 50–cysteine 63, cysteine 57–cysteine 77, cysteine 62–cysteine 91, and cysteine 79–cysteine 89.

It belongs to the neurotoxin 26 (DTX) family. As to expression, expressed by the venom gland.

The protein resides in the secreted. Its function is as follows. Insecticidal toxin. This toxin promotes opening of insect Nav channels. The toxin binds to the S1-S2 and S3-S4 loops in the domain II voltage-sensor of insect Nav channels (i.e., receptor site 4). The American cockroach P.americana is largely resistant to the effects of this toxin due to an unusual sequence within the domain II S1-S2 loop. In vivo, paralyzes lepidopteran and dipteran larvae. Paralyzed insects ultimately die from secondary effects of starvation and dehydration. This chain is Beta-diguetoxin-Dc1a, found in Diguetia canities (Desert bush spider).